Here is a 43-residue protein sequence, read N- to C-terminus: METATLVAIFLSGLLVSFTGYALYTAFGQPSQQLRDPFEEHGD.

Residues 7–29 form a helical membrane-spanning segment; that stretch reads VAIFLSGLLVSFTGYALYTAFGQ.

It belongs to the PsbN family.

Its subcellular location is the plastid. It localises to the chloroplast thylakoid membrane. In terms of biological role, may play a role in photosystem I and II biogenesis. The polypeptide is Protein PsbN (Draba nemorosa (Woodland whitlowgrass)).